The chain runs to 212 residues: Ribosomal RNA small subunit methyltransferase G (212 aa).

S-adenosyl-L-methionine is bound by residues glycine 80, leucine 85, 131–132 (AE), and arginine 146.

This sequence belongs to the methyltransferase superfamily. RNA methyltransferase RsmG family.

It localises to the cytoplasm. The catalysed reaction is guanosine(527) in 16S rRNA + S-adenosyl-L-methionine = N(7)-methylguanosine(527) in 16S rRNA + S-adenosyl-L-homocysteine. Specifically methylates the N7 position of guanine in position 527 of 16S rRNA. The polypeptide is Ribosomal RNA small subunit methyltransferase G (Stenotrophomonas maltophilia (strain R551-3)).